The primary structure comprises 295 residues: UDP-N-acetylenolpyruvoylglucosamine reductase (295 aa).

Residues 23 to 188 form the FAD-binding PCMH-type domain; the sequence is KVGGPADFLA…ISAKFALKPG (166 aa). The active site involves R167. Residue S217 is the Proton donor of the active site. E287 is an active-site residue.

Belongs to the MurB family. It depends on FAD as a cofactor.

The protein localises to the cytoplasm. It carries out the reaction UDP-N-acetyl-alpha-D-muramate + NADP(+) = UDP-N-acetyl-3-O-(1-carboxyvinyl)-alpha-D-glucosamine + NADPH + H(+). It functions in the pathway cell wall biogenesis; peptidoglycan biosynthesis. In terms of biological role, cell wall formation. In Streptococcus pyogenes serotype M1, this protein is UDP-N-acetylenolpyruvoylglucosamine reductase.